The following is a 145-amino-acid chain: Catabolic 3-dehydroquinase (145 aa).

Tyrosine 24 acts as the Proton acceptor in catalysis. The substrate site is built by asparagine 77, histidine 83, and aspartate 90. The active-site Proton donor is the histidine 103. Residues 104–105 and arginine 114 each bind substrate; that span reads IT.

It belongs to the type-II 3-dehydroquinase family. As to quaternary structure, homododecamer. Adopts a ring-like structure, composed of an arrangement of two hexameric rings stacked on top of one another.

It catalyses the reaction 3-dehydroquinate = 3-dehydroshikimate + H2O. The protein operates within aromatic compound metabolism; 3,4-dihydroxybenzoate biosynthesis; 3,4-dihydroxybenzoate from 3-dehydroquinate: step 1/2. In terms of biological role, is involved in the catabolism of quinate. Allows the utilization of quinate as carbon source via the beta-ketoadipate pathway. The polypeptide is Catabolic 3-dehydroquinase (Clavispora lusitaniae (strain ATCC 42720) (Yeast)).